A 176-amino-acid polypeptide reads, in one-letter code: SsrA-binding protein (176 aa).

The segment at 1 to 33 is disordered; that stretch reads MTEAGAKKAAGKKSGKGKGKNAKKNQPNITPVA. Residues 9 to 23 are compositionally biased toward basic residues; that stretch reads AAGKKSGKGKGKNAK.

The protein belongs to the SmpB family.

It is found in the cytoplasm. Functionally, required for rescue of stalled ribosomes mediated by trans-translation. Binds to transfer-messenger RNA (tmRNA), required for stable association of tmRNA with ribosomes. tmRNA and SmpB together mimic tRNA shape, replacing the anticodon stem-loop with SmpB. tmRNA is encoded by the ssrA gene; the 2 termini fold to resemble tRNA(Ala) and it encodes a 'tag peptide', a short internal open reading frame. During trans-translation Ala-aminoacylated tmRNA acts like a tRNA, entering the A-site of stalled ribosomes, displacing the stalled mRNA. The ribosome then switches to translate the ORF on the tmRNA; the nascent peptide is terminated with the 'tag peptide' encoded by the tmRNA and targeted for degradation. The ribosome is freed to recommence translation, which seems to be the essential function of trans-translation. The protein is SsrA-binding protein of Rhodopirellula baltica (strain DSM 10527 / NCIMB 13988 / SH1).